Here is a 197-residue protein sequence, read N- to C-terminus: uncharacterized protein (197 aa).

6 consecutive transmembrane segments (helical) span residues 5–23 (LNLL…GLRF), 27–46 (ISFA…MLRF), 55–77 (VIAG…LAYT), 87–109 (LSLL…VIRI), 116–138 (VFAF…LPTG), and 153–174 (FVEF…CLVF).

It localises to the cell membrane. This is an uncharacterized protein from Archaeoglobus fulgidus (strain ATCC 49558 / DSM 4304 / JCM 9628 / NBRC 100126 / VC-16).